The chain runs to 105 residues: Protein RALF-like 21 (105 aa).

A signal peptide spans 1-30; the sequence is MSNMKITNRFMLVATFIACVFISSMNMTVG. Cystine bridges form between C44–C53 and C67–C73.

This sequence belongs to the plant rapid alkalinization factor (RALF) family. As to expression, expressed in seeds and rosettes.

Its subcellular location is the secreted. In terms of biological role, cell signaling peptide that may regulate plant stress, growth, and development. Mediates a rapid alkalinization of extracellular space by mediating a transient increase in the cytoplasmic Ca(2+) concentration leading to a calcium-dependent signaling events through a cell surface receptor and a concomitant activation of some intracellular mitogen-activated protein kinases. The protein is Protein RALF-like 21 (RALFL21) of Arabidopsis thaliana (Mouse-ear cress).